The chain runs to 437 residues: Amino-acid acetyltransferase (437 aa).

An N-acetyltransferase domain is found at Glu289 to Lys429.

The protein belongs to the acetyltransferase family. ArgA subfamily.

The protein resides in the cytoplasm. The enzyme catalyses L-glutamate + acetyl-CoA = N-acetyl-L-glutamate + CoA + H(+). Its pathway is amino-acid biosynthesis; L-arginine biosynthesis; N(2)-acetyl-L-ornithine from L-glutamate: step 1/4. This is Amino-acid acetyltransferase from Actinobacillus pleuropneumoniae serotype 5b (strain L20).